Reading from the N-terminus, the 553-residue chain is Coiled-coil domain-containing protein 85A (553 aa).

Over residues 1-28 (MSKAAGGAAAAAAAAESCSPAPAGSSAA) the composition is skewed to low complexity. The segment at 1–37 (MSKAAGGAAAAAAAAESCSPAPAGSSAAPPAPVEDLS) is disordered. 2 coiled-coil regions span residues 43–109 (ELLQ…RDLC) and 137–169 (MHKE…KELC). 3 disordered regions span residues 203-414 (YVRD…GMNE), 433-461 (ENRM…GWGS), and 491-518 (SGAD…QPEP). Low complexity predominate over residues 209–220 (DGSSTSSTGSTD). A compositionally biased stretch (basic and acidic residues) spans 236 to 260 (HLQKPRSEGSPEHSKHRSASPEHPQ). Positions 376–389 (GGSGGSGGSGGGSR) are enriched in gly residues. Over residues 391 to 403 (GTLRRQAQEDGSP) the composition is skewed to basic and acidic residues. Positions 412-443 (MNESTLSYVRQLEARVRQLEEENRMLPQASQN) form a coiled coil. Positions 439–455 (QASQNRRQPPTRNSSNM) are enriched in polar residues. Residues 491–508 (SGADGSNSSPNSAASFSG) are compositionally biased toward low complexity. Arg-541 carries the post-translational modification Asymmetric dimethylarginine.

Belongs to the CCDC85 family. As to quaternary structure, may interact with ARVCF; CTNND1; CTNND2 and PKP4.

It localises to the cell junction. The protein resides in the adherens junction. May play a role in cell-cell adhesion and epithelium development through its interaction with proteins of the beta-catenin family. In Homo sapiens (Human), this protein is Coiled-coil domain-containing protein 85A (CCDC85A).